A 194-amino-acid chain; its full sequence is Small ribosomal subunit protein uS4c (194 aa).

The S4 RNA-binding domain maps to 82–143; sequence MRLDNILFRL…KQRSKALIQN (62 aa).

This sequence belongs to the universal ribosomal protein uS4 family. In terms of assembly, part of the 30S ribosomal subunit. Contacts protein S5. The interaction surface between S4 and S5 is involved in control of translational fidelity.

The protein resides in the plastid. It localises to the chloroplast. One of the primary rRNA binding proteins, it binds directly to 16S rRNA where it nucleates assembly of the body of the 30S subunit. Functionally, with S5 and S12 plays an important role in translational accuracy. In Sisyrinchium striatum (Satin flower), this protein is Small ribosomal subunit protein uS4c (rps4).